The following is a 135-amino-acid chain: Probable transcription factor At2g20613 (135 aa).

Positions 1-104 are disordered; the sequence is MSHKRFNPLT…KRGGGGGEEA (104 aa). A compositionally biased stretch (acidic residues) spans 28–41; that stretch reads DSSSDEETDSDSDS. The span at 62–80 shows a compositional bias: basic and acidic residues; that stretch reads KSVKISEKSVAKRSRETHE.

Belongs to the GeBP family.

This chain is Probable transcription factor At2g20613, found in Arabidopsis thaliana (Mouse-ear cress).